The primary structure comprises 227 residues: dTTP/UTP pyrophosphatase (227 aa).

The tract at residues methionine 1–isoleucine 21 is disordered. Aspartate 87 (proton acceptor) is an active-site residue.

Belongs to the Maf family. YhdE subfamily. A divalent metal cation is required as a cofactor.

The protein localises to the cytoplasm. The enzyme catalyses dTTP + H2O = dTMP + diphosphate + H(+). It carries out the reaction UTP + H2O = UMP + diphosphate + H(+). Nucleoside triphosphate pyrophosphatase that hydrolyzes dTTP and UTP. May have a dual role in cell division arrest and in preventing the incorporation of modified nucleotides into cellular nucleic acids. This Rhodopirellula baltica (strain DSM 10527 / NCIMB 13988 / SH1) protein is dTTP/UTP pyrophosphatase.